A 282-amino-acid chain; its full sequence is Putative hydrolase BamMC406_5393 (282 aa).

Residues E124, E126, and D155 each coordinate Mg(2+).

This sequence belongs to the FAH family. It depends on Mg(2+) as a cofactor.

This chain is Putative hydrolase BamMC406_5393, found in Burkholderia ambifaria (strain MC40-6).